The following is a 150-amino-acid chain: Cytochrome c oxidase subunit 5A, mitochondrial (150 aa).

The transit peptide at 1-41 (MLGAALRRCAVAATTWAGPRGLLHSARTPGPAAAIQSVRCY) directs the protein to the mitochondrion. The short motif at 2-20 (LGAALRRCAVAATTWAGPR) is the SIFI-degron element. N6-acetyllysine occurs at positions 87 and 113. Position 141 is a phosphothreonine (Thr141).

Belongs to the cytochrome c oxidase subunit 5A family. In terms of assembly, component of the cytochrome c oxidase (complex IV, CIV), a multisubunit enzyme composed of 14 subunits. The complex is composed of a catalytic core of 3 subunits MT-CO1, MT-CO2 and MT-CO3, encoded in the mitochondrial DNA, and 11 supernumerary subunits COX4I, COX5A, COX5B, COX6A, COX6B, COX6C, COX7A, COX7B, COX7C, COX8 and NDUFA4, which are encoded in the nuclear genome. The complex exists as a monomer or a dimer and forms supercomplexes (SCs) in the inner mitochondrial membrane with NADH-ubiquinone oxidoreductase (complex I, CI) and ubiquinol-cytochrome c oxidoreductase (cytochrome b-c1 complex, complex III, CIII), resulting in different assemblies (supercomplex SCI(1)III(2)IV(1) and megacomplex MCI(2)III(2)IV(2)). Interacts with AFG1L. Interacts with RAB5IF. In response to mitochondrial stress, the precursor protein is ubiquitinated by the SIFI complex in the cytoplasm before mitochondrial import, leading to its degradation. Within the SIFI complex, UBR4 initiates ubiquitin chain that are further elongated or branched by KCMF1.

Its subcellular location is the mitochondrion inner membrane. The protein operates within energy metabolism; oxidative phosphorylation. Component of the cytochrome c oxidase, the last enzyme in the mitochondrial electron transport chain which drives oxidative phosphorylation. The respiratory chain contains 3 multisubunit complexes succinate dehydrogenase (complex II, CII), ubiquinol-cytochrome c oxidoreductase (cytochrome b-c1 complex, complex III, CIII) and cytochrome c oxidase (complex IV, CIV), that cooperate to transfer electrons derived from NADH and succinate to molecular oxygen, creating an electrochemical gradient over the inner membrane that drives transmembrane transport and the ATP synthase. Cytochrome c oxidase is the component of the respiratory chain that catalyzes the reduction of oxygen to water. Electrons originating from reduced cytochrome c in the intermembrane space (IMS) are transferred via the dinuclear copper A center (CU(A)) of subunit 2 and heme A of subunit 1 to the active site in subunit 1, a binuclear center (BNC) formed by heme A3 and copper B (CU(B)). The BNC reduces molecular oxygen to 2 water molecules using 4 electrons from cytochrome c in the IMS and 4 protons from the mitochondrial matrix. This chain is Cytochrome c oxidase subunit 5A, mitochondrial (COX5A), found in Macaca mulatta (Rhesus macaque).